Consider the following 409-residue polypeptide: F-box/kelch-repeat protein At1g48625 (409 aa).

An F-box domain is found at 2–49 (ATMISNLPRDLMEEILSRVPLKSMRAVRLTCKNWHTLSITISESLAKM). Kelch repeat units lie at residues 169-218 (FIDY…LKGN) and 221-266 (WCAR…ILSC).

The sequence is that of F-box/kelch-repeat protein At1g48625 from Arabidopsis thaliana (Mouse-ear cress).